The chain runs to 613 residues: Pesticidal crystal-like protein Cry16Aa (613 aa).

Belongs to the delta endotoxin family.

Its subcellular location is the secreted. In terms of biological role, toxin active on mosquito larvae of the species Aedes aegypti, Culex pipiens and Anopheles stephensi. In Paraclostridium bifermentans (Clostridium bifermentans), this protein is Pesticidal crystal-like protein Cry16Aa (cry16Aa).